The primary structure comprises 693 residues: MGRDFSLKNTRNIGIMAHIDAGKTTTTERILYYTGRIHKIGETHEGASQMDWMEQEQDRGITITSAATTAEWKNHRVNIIDTPGHVDFTVEVERSLRVLDGAVTVLDAQSGVEPQTETVWRQATTYGVPRIVFVNKMDKIGANFDYAVSTLHDRLQANAAPIQLPIGAEDEFSAIIDLVTMKCFKYNNDLGTEIEEVEIPEDYRERAEEAREALIEAVAETNESLMEKIFDEQEITVDELKDAIRQATTDVEFYPVLCGTAFKNKGVQLMLDAVIDYLPSPLDVKPIVGHRADNPDEEVIAKADDDAEFAALAFKVMTDPYVGKLTFFRVYSGTLTSGSYVKNSTKGKRERVGRILQMHANSREEISSVYSGDIAAAVGLKDTGTGDTLCGEKNDIILESMEFPEPVIHLSVEPKSKADQDKMTQALVKLQEEDPTFKAHTDEETGQVIIGGMGELHLDIIVDRMKKEFNVEANVGAPMVSYRETFKTSAAVQGKFSRQSGGRGQYGDVHIEFTPNETGAGFEFENAIVGGVVPREYIPSVEQGLKDAMENGVLAGYPLIDVKAKLFDGSYHDVDSSEMAFKIAASLALKEAAKKCDPVILEPMMKVTIEMPEEYMGDIMGDVTARRGRVDGMEPRGNAQVVNAYVPLSEMFGYATSLRSNTQGRGTYTMYFDHYAEVPKSISEEIIKKNKGE.

The region spanning 8-282 (KNTRNIGIMA…AVIDYLPSPL (275 aa)) is the tr-type G domain. GTP is bound by residues 17–24 (AHIDAGKT), 81–85 (DTPGH), and 135–138 (NKMD).

Belongs to the TRAFAC class translation factor GTPase superfamily. Classic translation factor GTPase family. EF-G/EF-2 subfamily.

The protein localises to the cytoplasm. In terms of biological role, catalyzes the GTP-dependent ribosomal translocation step during translation elongation. During this step, the ribosome changes from the pre-translocational (PRE) to the post-translocational (POST) state as the newly formed A-site-bound peptidyl-tRNA and P-site-bound deacylated tRNA move to the P and E sites, respectively. Catalyzes the coordinated movement of the two tRNA molecules, the mRNA and conformational changes in the ribosome. The sequence is that of Elongation factor G from Staphylococcus intermedius.